We begin with the raw amino-acid sequence, 98 residues long: Small ribosomal subunit protein bS18 (98 aa).

Belongs to the bacterial ribosomal protein bS18 family. In terms of assembly, part of the 30S ribosomal subunit. Forms a tight heterodimer with protein bS6.

Binds as a heterodimer with protein bS6 to the central domain of the 16S rRNA, where it helps stabilize the platform of the 30S subunit. This is Small ribosomal subunit protein bS18 from Flavobacterium psychrophilum (strain ATCC 49511 / DSM 21280 / CIP 103535 / JIP02/86).